The chain runs to 331 residues: Probable tRNA pseudouridine synthase B (331 aa).

The active-site Nucleophile is the Asp66. In terms of domain architecture, PUA spans 233–307 (INKIIVKDSA…NEEDNREKYK (75 aa)).

Belongs to the pseudouridine synthase TruB family. Type 2 subfamily.

It catalyses the reaction uridine(55) in tRNA = pseudouridine(55) in tRNA. Could be responsible for synthesis of pseudouridine from uracil-55 in the psi GC loop of transfer RNAs. The sequence is that of Probable tRNA pseudouridine synthase B from Methanococcus aeolicus (strain ATCC BAA-1280 / DSM 17508 / OCM 812 / Nankai-3).